A 184-amino-acid polypeptide reads, in one-letter code: MSKIGNRSIKIDPSKVSLMQTTTLLTIKGPLGENTIKLPKNLPLKFVVENDTIKVTNNNNLKQTKILHGTFNALVNNAVIGVTKGFEKKLILVGVGYRANVEGQFLNLQLGYSHPIKELIPNQLTVKVEKNTEITISGIKKELVGQFATEIRKWRKPEPYKGKGVLYFNEVIVRKQGKTAEGKK.

This sequence belongs to the universal ribosomal protein uL6 family. Part of the 50S ribosomal subunit.

In terms of biological role, this protein binds to the 23S rRNA, and is important in its secondary structure. It is located near the subunit interface in the base of the L7/L12 stalk, and near the tRNA binding site of the peptidyltransferase center. The sequence is that of Large ribosomal subunit protein uL6 from Mycoplasma genitalium (strain ATCC 33530 / DSM 19775 / NCTC 10195 / G37) (Mycoplasmoides genitalium).